A 212-amino-acid polypeptide reads, in one-letter code: Phosphoribosyl-dephospho-CoA transferase (212 aa).

Active-site residues include Asp139 and Asp141.

This sequence belongs to the MdcG family.

The enzyme catalyses apo-[malonate decarboxylase ACP] + 2'-(5''-triphospho-alpha-D-ribosyl)-3'-dephospho-CoA = holo-[malonate decarboxylase ACP] + diphosphate. Its function is as follows. Transfers 2'-(5-triphosphoribosyl)-3'-dephosphocoenzyme-A to the apo-[acyl-carrier-protein] of the malonate decarboxylase to yield holo-[acyl-carrier-protein]. This chain is Phosphoribosyl-dephospho-CoA transferase, found in Azotobacter vinelandii (strain DJ / ATCC BAA-1303).